Here is a 148-residue protein sequence, read N- to C-terminus: uncharacterized protein (148 aa).

An N-terminal signal peptide occupies residues 1-23; sequence MKALVAVSAVAVVALLGVSSAQA. The tract at residues 22–45 is disordered; it reads QADPEADPGAGEANYGGPPSSPRL.

It to M.leprae ML2452.

This is an uncharacterized protein from Mycobacterium bovis (strain ATCC BAA-935 / AF2122/97).